A 279-amino-acid chain; its full sequence is Sarcosine/dimethylglycine N-methyltransferase (279 aa).

Belongs to the methyltransferase superfamily. As to quaternary structure, monomer.

The enzyme catalyses sarcosine + 2 S-adenosyl-L-methionine = glycine betaine + 2 S-adenosyl-L-homocysteine + 2 H(+). It carries out the reaction sarcosine + S-adenosyl-L-methionine = N,N-dimethylglycine + S-adenosyl-L-homocysteine + H(+). It catalyses the reaction N,N-dimethylglycine + S-adenosyl-L-methionine = glycine betaine + S-adenosyl-L-homocysteine + H(+). It functions in the pathway amine and polyamine biosynthesis; betaine biosynthesis via glycine pathway; betaine from glycine: step 2/3. It participates in amine and polyamine biosynthesis; betaine biosynthesis via glycine pathway; betaine from glycine: step 3/3. P-chloromercuribenzoate acid inhibits 23% of the SDMT activities on sarcosine and dimethylglycine, and S-adenosylhomocysteine (AdoHcy) inhibits completely GSMT activities. Its function is as follows. Catalyzes the methylation of sarcosine and dimethylglycine to dimethylglycine and betaine, respectively, with S-adenosylmethionine (AdoMet) acting as the methyl donor. It has strict specificity for sarcosine and dimethylglycine as the methyl group acceptors. The chain is Sarcosine/dimethylglycine N-methyltransferase from Halorhodospira halochloris (Ectothiorhodospira halochloris).